Here is a 461-residue protein sequence, read N- to C-terminus: Argininosuccinate lyase (461 aa).

Belongs to the lyase 1 family. Argininosuccinate lyase subfamily.

The protein localises to the cytoplasm. The enzyme catalyses 2-(N(omega)-L-arginino)succinate = fumarate + L-arginine. The protein operates within amino-acid biosynthesis; L-arginine biosynthesis; L-arginine from L-ornithine and carbamoyl phosphate: step 3/3. The sequence is that of Argininosuccinate lyase from Bacillus subtilis (strain 168).